The following is a 168-amino-acid chain: Endoribonuclease YbeY (168 aa).

Residues His-128, His-132, and His-138 each coordinate Zn(2+).

The protein belongs to the endoribonuclease YbeY family. Zn(2+) is required as a cofactor.

The protein localises to the cytoplasm. Single strand-specific metallo-endoribonuclease involved in late-stage 70S ribosome quality control and in maturation of the 3' terminus of the 16S rRNA. The polypeptide is Endoribonuclease YbeY (Sphingopyxis alaskensis (strain DSM 13593 / LMG 18877 / RB2256) (Sphingomonas alaskensis)).